Consider the following 403-residue polypeptide: MVAQNNQQNKDETKGIKSYYCSKIEELEIKVNEKAQDLRRLEAQRNELNNRVRMLKEELQLLTNPGSHVAEVVKLMGKNKVLVKVNPEGKFVVDIDPTVDIAKLTPSTRAALKHESYTLHRILPNKIDPLVSLMKVEKIPDSTYDMVGGLDKQIKEIKEVIELPIKHPELFESLGIAQPKGVLLYGPPGTGKTLLARAVAHHTDCTFIRVSGSELVQKYIGEGSRMVRELFIMAREHAPSIIFMDEIDSIGSSRGESGSGGGDSEVQRTMLELLNQLDGFESTKNIKVLMCTNRIDILDPALLRPGRIDRKIEFPNPGDAGRLDILKIHSRKMNLTRGINLKKISDKMNGASGAELKAVCTEAGMYALRERRVHVSQEDFEMAVSKVMKKDSEQNMSINKLWK.

186–193 (GPPGTGKT) is an ATP binding site.

It belongs to the AAA ATPase family.

It localises to the cytoplasm. The protein localises to the nucleus. Functionally, the 26S proteasome is involved in the ATP-dependent degradation of ubiquitinated proteins. The regulatory (or ATPase) complex confers ATP dependency and substrate specificity to the 26S complex. In Dictyostelium discoideum (Social amoeba), this protein is 26S proteasome regulatory subunit 8 (psmC5).